Consider the following 1388-residue polypeptide: Endoribonuclease Dicer homolog 2 (1388 aa).

In terms of domain architecture, Helicase ATP-binding spans 31–210 (ALEKAIKQNT…DSYWKKIHEL (180 aa)). Position 44–51 (44–51 (LETGSGKT)) interacts with ATP. Positions 152–155 (DECH) match the DECH box motif. One can recognise a Helicase C-terminal domain in the interval 380-544 (LGYSSLENIR…PLPDDSDEPL (165 aa)). A Dicer dsRNA-binding fold domain is found at 559 to 645 (SVSLIYHYCS…VPDMVVAETV (87 aa)). A PAZ domain is found at 805-935 (TSHEVLEKHE…LPPELCHVIL (131 aa)). 2 consecutive RNase III domains span residues 962 to 1113 (AYNL…SEGG) and 1149 to 1296 (VGYM…VDSG). Mg(2+) is bound by residues E1188, D1282, and E1285. Residues 1315–1384 (TPETVKLHPV…YKEVLNLLKN (70 aa)) form the DRBM domain.

It belongs to the helicase family. Dicer subfamily. The cofactor is Mg(2+). Requires Mn(2+) as cofactor.

It is found in the nucleus. The protein resides in the cytoplasm. Ribonuclease (RNase) III involved in RNA-mediated post-transcriptional gene silencing (PTGS). Involved in the processing of natural small interfering RNAs (nat-siRNAs, derived from cis-natural antisense transcripts) by cleaving small dsRNAs into 24 nucleotide nat-siRNAs. Plays an essential role in transitive silencing of transgenes by processing secondary siRNAs. This pathway, which requires DCL4 and RDR6, amplifies silencing by using the target RNA as substrate to generate secondary siRNAs, providing an efficient mechanism for long-distance silencing. May participate with DCL3 in the production of 24 nucleotide repeat-associated siRNAs (ra-siRNAs) which derive from heterochromatin and DNA repeats such as transposons. Plays a role in antiviral RNA silencing. Involved in the production of viral siRNAs derived from the turnip crinkle virus (TCV) and tobacco rattle virus (TRV). Targeted by the viral silencing suppressor (VSR) protein 2b of the cucumber mosaic virus (CMV) that inactivates DCL2 function in RNA silencing. Does not seem to be involved in microRNAs (miRNAs) processing. This Arabidopsis thaliana (Mouse-ear cress) protein is Endoribonuclease Dicer homolog 2.